The chain runs to 312 residues: Ribosomal protein L11 methyltransferase (312 aa).

4 residues coordinate S-adenosyl-L-methionine: Thr-160, Gly-181, Asp-203, and Asn-246.

This sequence belongs to the methyltransferase superfamily. PrmA family.

The protein resides in the cytoplasm. It carries out the reaction L-lysyl-[protein] + 3 S-adenosyl-L-methionine = N(6),N(6),N(6)-trimethyl-L-lysyl-[protein] + 3 S-adenosyl-L-homocysteine + 3 H(+). Methylates ribosomal protein L11. The chain is Ribosomal protein L11 methyltransferase from Staphylococcus epidermidis (strain ATCC 12228 / FDA PCI 1200).